The sequence spans 179 residues: Inner membrane-spanning protein YciB (179 aa).

The next 5 membrane-spanning stretches (helical) occupy residues 22-42 (IYAATAALIVATAIVLIYSWV), 50-70 (MALITFVLVVVFGGLTLFFHN), 76-96 (WKVTVIYALFAGALLVSQWVM), 121-141 (LAWAVFFILCGLANIYIAFWL), and 149-169 (FKVFGLTALTLIFTLLSGIYI).

This sequence belongs to the YciB family.

It localises to the cell inner membrane. Plays a role in cell envelope biogenesis, maintenance of cell envelope integrity and membrane homeostasis. This is Inner membrane-spanning protein YciB from Shigella boydii serotype 4 (strain Sb227).